The primary structure comprises 553 residues: Imidazole glycerol phosphate synthase hisHF (553 aa).

The 221-residue stretch at 3–223 (TVHLLDYVAG…QLHSVTLEDS (221 aa)) folds into the Glutamine amidotransferase type-1 domain. Catalysis depends on for GATase activity residues cysteine 81, histidine 194, and glutamate 196. Positions 232–553 (LTRRIIACLD…FLVRRFEPDV (322 aa)) are cyclase. Catalysis depends on residues aspartate 241 and aspartate 403.

In the C-terminal section; belongs to the HisA/HisF family.

The catalysed reaction is 5-[(5-phospho-1-deoxy-D-ribulos-1-ylimino)methylamino]-1-(5-phospho-beta-D-ribosyl)imidazole-4-carboxamide + L-glutamine = D-erythro-1-(imidazol-4-yl)glycerol 3-phosphate + 5-amino-1-(5-phospho-beta-D-ribosyl)imidazole-4-carboxamide + L-glutamate + H(+). The enzyme catalyses L-glutamine + H2O = L-glutamate + NH4(+). It participates in amino-acid biosynthesis; L-histidine biosynthesis; L-histidine from 5-phospho-alpha-D-ribose 1-diphosphate: step 5/9. IGPS catalyzes the conversion of PRFAR and glutamine to IGP, AICAR and glutamate. The glutaminase domain produces the ammonia necessary for the cyclase domain to produce IGP and AICAR from PRFAR. The ammonia is channeled to the active site of the cyclase domain. The protein is Imidazole glycerol phosphate synthase hisHF (hisHF) of Emericella nidulans (strain FGSC A4 / ATCC 38163 / CBS 112.46 / NRRL 194 / M139) (Aspergillus nidulans).